Here is a 67-residue protein sequence, read N- to C-terminus: DNA-directed RNA polymerase subunit omega (67 aa).

Belongs to the RNA polymerase subunit omega family. As to quaternary structure, the RNAP catalytic core consists of 2 alpha, 1 beta, 1 beta' and 1 omega subunit. When a sigma factor is associated with the core the holoenzyme is formed, which can initiate transcription.

The enzyme catalyses RNA(n) + a ribonucleoside 5'-triphosphate = RNA(n+1) + diphosphate. Its function is as follows. Promotes RNA polymerase assembly. Latches the N- and C-terminal regions of the beta' subunit thereby facilitating its interaction with the beta and alpha subunits. The polypeptide is DNA-directed RNA polymerase subunit omega (Listeria innocua serovar 6a (strain ATCC BAA-680 / CLIP 11262)).